The chain runs to 647 residues: Spindle pole body-associated protein VIK1 (647 aa).

Residues 36-51 show a composition bias toward polar residues; sequence NTTNTMNGSRPSSMKS. Positions 36–55 are disordered; it reads NTTNTMNGSRPSSMKSSLAL. Positions 202-350 form a coiled coil; sequence DHEITEEISQ…SKQEKFYNDT (149 aa).

As to quaternary structure, interacts with KAR3; the interaction is direct.

It is found in the cytoplasm. The protein localises to the cytoskeleton. Its subcellular location is the microtubule organizing center. It localises to the spindle pole body. The protein resides in the nucleus. Together with the minus end-directed microtubule motor KAR3, plays a role in microtubule organization. Recruits KAR3 to microtubules, and together they may stabilize the polymers. The KAR3-VIK1 heterodimer cross-links anti-parallel microtubules. Targets and/or maintains KAR3 at the spindle pole body during vegetative growth. The chain is Spindle pole body-associated protein VIK1 (VIK1) from Saccharomyces cerevisiae (strain ATCC 204508 / S288c) (Baker's yeast).